Here is a 159-residue protein sequence, read N- to C-terminus: 6,7-dimethyl-8-ribityllumazine synthase (159 aa).

Residues Phe-23, 58-60 (AYE), and 82-84 (TII) each bind 5-amino-6-(D-ribitylamino)uracil. The active-site Proton donor is His-90. Leu-115 contributes to the 5-amino-6-(D-ribitylamino)uracil binding site. Arg-129 is a binding site for (2S)-2-hydroxy-3-oxobutyl phosphate.

Belongs to the DMRL synthase family. As to quaternary structure, forms an icosahedral capsid composed of 60 subunits, arranged as a dodecamer of pentamers.

It carries out the reaction (2S)-2-hydroxy-3-oxobutyl phosphate + 5-amino-6-(D-ribitylamino)uracil = 6,7-dimethyl-8-(1-D-ribityl)lumazine + phosphate + 2 H2O + H(+). Its pathway is cofactor biosynthesis; riboflavin biosynthesis; riboflavin from 2-hydroxy-3-oxobutyl phosphate and 5-amino-6-(D-ribitylamino)uracil: step 1/2. Functionally, catalyzes the formation of 6,7-dimethyl-8-ribityllumazine by condensation of 5-amino-6-(D-ribitylamino)uracil with 3,4-dihydroxy-2-butanone 4-phosphate. This is the penultimate step in the biosynthesis of riboflavin. The polypeptide is 6,7-dimethyl-8-ribityllumazine synthase (Blochmanniella floridana).